The primary structure comprises 396 residues: Activity-regulated cytoskeleton-associated protein (396 aa).

The stretch at Ser-54–Tyr-78 forms a coiled coil. Positions Lys-89–Glu-100 are interaction with SH3GL1 or SH3GL3. The disordered stretch occupies residues Pro-177–Pro-207. The interval Gln-195–Phe-214 is interaction with DNM2. Residue Ser-260 is modified to Phosphoserine; by CaMK2. Glycyl lysine isopeptide (Lys-Gly) (interchain with G-Cter in ubiquitin) cross-links involve residues Lys-268 and Lys-269. Thr-278 bears the Phosphothreonine mark. Residues Gln-356 to Glu-396 form a disordered region. Over residues Ala-382–Glu-396 the composition is skewed to polar residues.

Belongs to the ARC/ARG3.1 family. As to quaternary structure, homooligomer; homooligomerizes into virion-like capsids. Interacts with SH3GL1/endophilin-2, SH3GL3/endophilin-3 and DNM2/DYN2. Interacts with CAMK2B (in the kinase inactive state); leading to target ARC to inactive synapses. Interacts with PSEN1. Interacts with GRIN2A and GRIN2B; inhibiting homooligomerization. Ubiquitinated by UBE3A, leading to its degradation by the proteasome, thereby promoting AMPA receptors (AMPARs) expression at synapses. Ubiquitinated by RNF216 at Lys-268 and Lys-269 limiting ARC protein levels induced by synaptic activity and thus regulating ARC-dependent forms of synaptic plasticity. Post-translationally, palmitoylation anchors the protein into the membrane by allowing direct insertion into the hydrophobic core of the lipid bilayer. In terms of processing, phosphorylation at Ser-260 by CaMK2 prevents homooligomerization into virion-like capsids by disrupting an interaction surface essential for high-order oligomerization. Phosphorylation by CaMK2 inhibits synaptic activity. Expressed in brain and testis. In primary visual cortex, detected in all cortical layers with the exception of layer 5: present at highest level in layers 2/3 and 4, the predominant sites of ocular dominance plasticity (at protein level). Also expressed in skin-migratory dendritic cells.

It is found in the extracellular vesicle membrane. It localises to the postsynaptic cell membrane. The protein localises to the synapse. Its subcellular location is the postsynaptic density. The protein resides in the early endosome membrane. It is found in the cell projection. It localises to the dendrite. The protein localises to the cytoplasm. Its subcellular location is the cytoskeleton. The protein resides in the cell cortex. It is found in the dendritic spine. It localises to the cytoplasmic vesicle. The protein localises to the secretory vesicle. Its subcellular location is the acrosome. The protein resides in the clathrin-coated vesicle membrane. Functionally, master regulator of synaptic plasticity that self-assembles into virion-like capsids that encapsulate RNAs and mediate intercellular RNA transfer in the nervous system. ARC protein is released from neurons in extracellular vesicles that mediate the transfer of ARC mRNA into new target cells, where ARC mRNA can undergo activity-dependent translation. ARC capsids are endocytosed and are able to transfer ARC mRNA into the cytoplasm of neurons. Acts as a key regulator of synaptic plasticity: required for protein synthesis-dependent forms of long-term potentiation (LTP) and depression (LTD) and for the formation of long-term memory. Regulates synaptic plasticity by promoting endocytosis of AMPA receptors (AMPARs) in response to synaptic activity: this endocytic pathway maintains levels of surface AMPARs in response to chronic changes in neuronal activity through synaptic scaling, thereby contributing to neuronal homeostasis. Acts as a postsynaptic mediator of activity-dependent synapse elimination in the developing cerebellum by mediating elimination of surplus climbing fiber synapses. Accumulates at weaker synapses, probably to prevent their undesired enhancement. This suggests that ARC-containing virion-like capsids may be required to eliminate synaptic material. Required to transduce experience into long-lasting changes in visual cortex plasticity and for long-term memory. Involved in postsynaptic trafficking and processing of amyloid-beta A4 (APP) via interaction with PSEN1. In addition to its role in synapses, also involved in the regulation of the immune system: specifically expressed in skin-migratory dendritic cells and regulates fast dendritic cell migration, thereby regulating T-cell activation. The polypeptide is Activity-regulated cytoskeleton-associated protein (Mus musculus (Mouse)).